We begin with the raw amino-acid sequence, 67 residues long: Large ribosomal subunit protein uL29 (67 aa).

It belongs to the universal ribosomal protein uL29 family.

The protein is Large ribosomal subunit protein uL29 of Desulforudis audaxviator (strain MP104C).